A 154-amino-acid polypeptide reads, in one-letter code: Troponin C, isoform 1 (154 aa).

EF-hand domains lie at 8–43 (EQTALLRNAFNAFDPEKNGYINTAMVGTILSMLGHQ), 44–79 (LDDATLADIIAEVDEDGSGQIEFEEFTTLAARFLVE), 84–119 (AMMAELKEAFRLYDKEGNGYITTGVLREILRELDDK), and 120–154 (LTNDDLDMMIEEIDSDGSGTVDFDEFMEVMTGGDD). 5 residues coordinate Ca(2+): Asp57, Asp59, Ser61, Gln63, and Glu68. Ca(2+) contacts are provided by Asp133, Asp135, Ser137, Thr139, and Glu144.

Belongs to the troponin C family. In terms of tissue distribution, present only in adult muscles.

The polypeptide is Troponin C, isoform 1 (TpnC41C) (Drosophila melanogaster (Fruit fly)).